A 291-amino-acid chain; its full sequence is rRNA 2'-O-methyltransferase fibrillarin (291 aa).

Composition is skewed to basic and acidic residues over residues 1-12 and 20-29; these read MKKTNKRPDGRK and FRSDKGEGRG. A disordered region spans residues 1-45; the sequence is MKKTNKRPDGRKFQKGGKPFRSDKGEGRGRMNNKKKGSVNAGLDR. Asymmetric dimethylarginine is present on residues R28 and R62. S-adenosyl-L-methionine-binding positions include 134-135, 153-154, 178-179, and 198-201; these read TT, EF, DA, and DVSQ.

Belongs to the methyltransferase superfamily. Fibrillarin family. As to quaternary structure, component of box C/D small nucleolar ribonucleoprotein (snoRNP) particles.

The protein localises to the nucleus. It localises to the nucleolus. It carries out the reaction L-glutaminyl-[histone H2A] + S-adenosyl-L-methionine = N(5)-methyl-L-glutaminyl-[histone H2A] + S-adenosyl-L-homocysteine + H(+). Its function is as follows. S-adenosyl-L-methionine-dependent methyltransferase that has the ability to methylate both RNAs and proteins. Involved in pre-rRNA processing. Utilizes the methyl donor S-adenosyl-L-methionine to catalyze the site-specific 2'-hydroxyl methylation of ribose moieties in pre-ribosomal RNA. Site specificity is provided by a guide RNA that base pairs with the substrate. Methylation occurs at a characteristic distance from the sequence involved in base pairing with the guide RNA. Also acts as a protein methyltransferase by mediating methylation of 'Gln-105' of histone H2A (H2AQ105me), a modification that impairs binding of the FACT complex and is specifically present at 35S ribosomal DNA locus. This is rRNA 2'-O-methyltransferase fibrillarin (NOP1) from Encephalitozoon cuniculi (strain GB-M1) (Microsporidian parasite).